A 263-amino-acid polypeptide reads, in one-letter code: Small ribosomal subunit protein eS4 (263 aa).

The 63-residue stretch at 42–104 folds into the S4 RNA-binding domain; sequence LPLIIFLRNR…TGENFRLIYD (63 aa).

Belongs to the eukaryotic ribosomal protein eS4 family.

This is Small ribosomal subunit protein eS4 (RPS4) from Cricetulus griseus (Chinese hamster).